The chain runs to 787 residues: Signal transducer and activator of transcription 5B (787 aa).

Tyr90 bears the Phosphotyrosine mark. Ser128 is modified (phosphoserine). An SH2 domain is found at 589–686 (WNDGAILGFV…EVYSKYYTPV (98 aa)). Tyr682 carries the post-translational modification Phosphotyrosine. Phosphotyrosine; by HCK, JAK and PTK6 is present on Tyr699.

It belongs to the transcription factor STAT family. In terms of assembly, upon activation, forms a homodimer or a heterodimer with a related family member. Binds NR3C1. Interacts with NCOA1. Interacts with NMI. Interacts with SOCS7. Interacts (via SH2 domain) with INSR. Interacts with CPEB3; this inhibits STAT5B-mediated transcriptional activation. In terms of processing, tyrosine phosphorylated in response to signaling via activated KIT, resulting in translocation to the nucleus. Tyrosine phosphorylated in response to signaling via activated FLT3; wild-type FLT3 results in much weaker phosphorylation than constitutively activated mutant FLT3. Alternatively, can be phosphorylated by JAK2. Phosphorylation at Tyr-699 by PTK6 or HCK leads to an increase of its transcriptional activity.

The protein localises to the cytoplasm. It is found in the nucleus. Functionally, carries out a dual function: signal transduction and activation of transcription. Mediates cellular responses to the cytokine KITLG/SCF and other growth factors. Binds to the GAS element and activates PRL-induced transcription. Positively regulates hematopoietic/erythroid differentiation. This chain is Signal transducer and activator of transcription 5B (STAT5B), found in Bos taurus (Bovine).